We begin with the raw amino-acid sequence, 429 residues long: Histidine--tRNA ligase (429 aa).

The protein belongs to the class-II aminoacyl-tRNA synthetase family. In terms of assembly, homodimer.

The protein resides in the cytoplasm. The enzyme catalyses tRNA(His) + L-histidine + ATP = L-histidyl-tRNA(His) + AMP + diphosphate + H(+). The polypeptide is Histidine--tRNA ligase (Streptococcus pneumoniae serotype 19F (strain G54)).